The chain runs to 427 residues: O-methyltransferase FrzF (427 aa).

Asp-281 lines the S-adenosyl-L-methionine pocket. His-327 functions as the Proton acceptor in the catalytic mechanism.

Belongs to the class I-like SAM-binding methyltransferase superfamily. Cation-independent O-methyltransferase family. In terms of assembly, homodimer.

It carries out the reaction (1S,4S)-4-[(4-hydroxyphenyl)methyl]-2,5-diazaspiro[bicyclo[3.2.1]octane-6,1'-cyclohexan]-4'-one + S-adenosyl-L-methionine = (1S,4S)-4-[(4-methoxyphenyl)methyl]-2,5-diazaspiro[bicyclo[3.2.1]octane-6,1'-cyclohexan]-4'-one + S-adenosyl-L-homocysteine + H(+). It catalyses the reaction (1S,4S)-4-[(4-hydroxyphenyl)methyl]-2-methyl-2,5-diazaspiro[bicyclo[3.2.1]octane-6,1'-cyclohexan]-4'-one + S-adenosyl-L-methionine = (1S,4S)-4-[(4-methoxyphenyl)methyl]-2-methyl-2,5-diazaspiro[bicyclo[3.2.1]octane-6,1'-cyclohexan]-4'-one + S-adenosyl-L-homocysteine + H(+). It participates in secondary metabolite biosynthesis. In terms of biological role, O-methyltransferase; part of the gene cluster that mediates the biosynthesis of the alkaloid (-)-FR901483, a potent immunosuppressant that shows efficacy in animal models and a probable inhibitor of purine nucleotide biosynthesis by targeting phosphoribosylpyrophosphate amidotransferase (PPAT). Within the pathway, FrzF methylates the phenolic oxygen at position C4. The biosynthesis of (-)-FR901483 starts with the condensation of two L-tyrosines to yield (S,S)-dityrosyl-piperazine. This process occurs in 3 steps with the non-canonical nonribosomal peptide synthetase FrzA catalyzing the reduction of L-tyrosine into L-tyrosinal, the spontaneous condensation of 2 L-tyrosinal units, and the subsequent reduction by the NmrA-like family domain-containing oxidoreductase FrzB. The cytochrome P450 monooxygenase FrzC then performs coupling between N10 and C1' to morph the piperazine into a 1,4-diazabicyclo[3.2.1]octane spiro-fused to a 2,5-cyclohexadienone. The dienone portion is further reduced to cyclohexanone by the flavin-dependent reductase FrzD. The methyltranserases (MTs) FrzE and FrzF are then involved in the methylation at the C10' amine and the C4 phenolic oxygen, respectively. The order of the two MTs appear to be interchangeable. Cleavage of the C9-N10' bond by the dioxygenase FrzG then leads to formation of a conjugated iminium. In addition to the oxidation of C9, an additional dehydrogenation between C7 and C8 can occur to give a likely shunt product. The next biosynthetic step is the intramolecular aldol condensation catalyzed by the newly identified aldolase FrzH to yield an aza-tricyclic product with the formation of a C9-C3' bond. The short-chain dehydrogenase/reductase FrzI then produces dephospho-(-)-FR901483 that is phosphorylated at C4'-OH into (-)-FR901483 by the phosphotransferase FrzJ. The protein is O-methyltransferase FrzF of Cladobotryum sp.